We begin with the raw amino-acid sequence, 579 residues long: ATP-dependent RNA helicase SUV3, mitochondrial (579 aa).

The N-terminal 59 residues, 1–59, are a transit peptide targeting the mitochondrion; sequence MAVAAALLRRRALYSALASPSWLHDTSSCYICSISGTHSLVNHPNLRLQRGYHNSGKFD. Residues 72–213 enclose the Helicase ATP-binding domain; that stretch reads NAREKKRNVF…QRILEPTGDV (142 aa). 85 to 92 contacts ATP; sequence GPTNSGKT. Residues 214–388 form the Helicase C-terminal domain; sequence VTVQYYERLS…GLFPTFDVLS (175 aa). An N-linked (GlcNAc...) asparagine glycan is attached at N309.

It belongs to the helicase family. Homodimer; in free form. Component of the mitochondrial degradosome (mtEXO) complex which is a heteropentamer containing 2 copies of SUPV3L1 and 3 copies of PNPT1. Mg(2+) serves as cofactor. Mn(2+) is required as a cofactor.

It localises to the nucleus. The protein resides in the mitochondrion matrix. Its subcellular location is the mitochondrion nucleoid. The enzyme catalyses ATP + H2O = ADP + phosphate + H(+). Its function is as follows. Major helicase player in mitochondrial RNA metabolism. Component of the mitochondrial degradosome (mtEXO) complex, that degrades 3' overhang double-stranded RNA with a 3'-to-5' directionality in an ATP-dependent manner. ATPase and ATP-dependent multisubstrate helicase, able to unwind double-stranded (ds) DNA and RNA, and RNA/DNA heteroduplexes in the 5'-to-3' direction. Plays a role in the RNA surveillance system in mitochondria; regulates the stability of mature mRNAs, the removal of aberrantly formed mRNAs and the rapid degradation of non coding processing intermediates. Confers salinity and drought stress tolerances by maintaining both photosynthesis and antioxidant machinery, probably via an increase in plant hormones levels such as gibberellic acid (GA(3)), the cytokinin zeatin (Z) and indole-3-acetic acid (IAA). This is ATP-dependent RNA helicase SUV3, mitochondrial from Oryza sativa subsp. japonica (Rice).